The following is a 256-amino-acid chain: Ras-related protein Rab-26 (256 aa).

Positions Met1–Val53 are disordered. Over residues Pro38–Pro48 the composition is skewed to pro residues. 9 residues coordinate GTP: Ser72, Gly73, Val74, Gly75, Lys76, Thr77, Cys78, Ser95, and Thr96. Position 77 (Thr77) interacts with Mg(2+). Short sequence motifs (switch) lie at residues Gly86–Phe101 and Asp119–Asp136. Mg(2+) contacts are provided by Thr96 and Asp119. The GTP site is built by Gly122, Asn177, Lys178, Asp180, Ala208, and Lys209. 2 S-geranylgeranyl cysteine lipidation sites follow: Cys253 and Cys254.

This sequence belongs to the small GTPase superfamily. Rab family. Mg(2+) is required as a cofactor.

Its subcellular location is the cell membrane. It catalyses the reaction GTP + H2O = GDP + phosphate + H(+). With respect to regulation, regulated by guanine nucleotide exchange factors (GEFs) which promote the exchange of bound GDP for free GTP. Regulated by GTPase activating proteins (GAPs) which increase the GTP hydrolysis activity. Inhibited by GDP dissociation inhibitors (GDIs). Its function is as follows. The small GTPases Rab are key regulators of intracellular membrane trafficking, from the formation of transport vesicles to their fusion with membranes. Rabs cycle between an inactive GDP-bound form and an active GTP-bound form that is able to recruit to membranes different set of downstream effectors directly responsible for vesicle formation, movement, tethering and fusion. RAB26 mediates transport of ADRA2A and ADRA2B from the Golgi to the cell membrane. Plays a role in the maturation of zymogenic granules and in pepsinogen secretion in the stomach. Plays a role in the secretion of amylase from acinar granules in the parotid gland. This chain is Ras-related protein Rab-26 (RAB26), found in Bos taurus (Bovine).